The following is a 391-amino-acid chain: MPGNSLGKMFRITTFGESHGPMIGVIVDGVPAGLYISKEDIEFELSFRRPGKQFVSGRREKDEPEIVSGVYNGRTTGAPLTIIIRNNDVISSLYEEVKHKPRPGHADLPYIMKYGYENWDYRGGGRSSARETASRVAASAIAKKLLMLTDTVIGAHLKSLGPVELDEDVSFREIFCSKYSPVRASKKWLEEKYEELIKQATVEGDSWGGVAEVIADNVPIGLGEPVFDKLKSDLAKALLSIPAVVGFEYGLGFKASKMKGSEANDEIVIKDNGKLGWRYNKAGGILGGLSNGEKLVLRCAFKPTSSIRKPQKTVDLRTSEESTIRVIGRHDPAVAIRGVSVAEAMVALVLVDHALRSGYIPPVKLSEDQARIIEEKWRRYVEECKPMQESQ.

Arginine 48 contributes to the NADP(+) binding site. FMN-binding positions include 126–128 (RSS), glycine 287, 302–306 (KPTSS), and arginine 329.

Belongs to the chorismate synthase family. The cofactor is FMNH2.

It catalyses the reaction 5-O-(1-carboxyvinyl)-3-phosphoshikimate = chorismate + phosphate. It functions in the pathway metabolic intermediate biosynthesis; chorismate biosynthesis; chorismate from D-erythrose 4-phosphate and phosphoenolpyruvate: step 7/7. Its function is as follows. Catalyzes the anti-1,4-elimination of the C-3 phosphate and the C-6 proR hydrogen from 5-enolpyruvylshikimate-3-phosphate (EPSP) to yield chorismate, which is the branch point compound that serves as the starting substrate for the three terminal pathways of aromatic amino acid biosynthesis. This reaction introduces a second double bond into the aromatic ring system. The polypeptide is Chorismate synthase (Sulfolobus acidocaldarius (strain ATCC 33909 / DSM 639 / JCM 8929 / NBRC 15157 / NCIMB 11770)).